The following is a 265-amino-acid chain: Hydroxyethylthiazole kinase (265 aa).

M50 lines the substrate pocket. ATP contacts are provided by R125 and T171. G198 is a binding site for substrate.

It belongs to the Thz kinase family. Requires Mg(2+) as cofactor.

The catalysed reaction is 5-(2-hydroxyethyl)-4-methylthiazole + ATP = 4-methyl-5-(2-phosphooxyethyl)-thiazole + ADP + H(+). It participates in cofactor biosynthesis; thiamine diphosphate biosynthesis; 4-methyl-5-(2-phosphoethyl)-thiazole from 5-(2-hydroxyethyl)-4-methylthiazole: step 1/1. Catalyzes the phosphorylation of the hydroxyl group of 4-methyl-5-beta-hydroxyethylthiazole (THZ). The protein is Hydroxyethylthiazole kinase of Salmonella agona (strain SL483).